The sequence spans 867 residues: MSAGWRTLLLRIGDRCPEYGGSADHKEHIETCYGVLCREYEHSKDAMFEFLLQCADQLPHKIPFFGVLIGLINLENEDFSKGIVDTTHANLQDALHNENRDRIRILLRFLCGLMCSKVVLPNSIIETFEALLSSAATILDEETGNPSWQPRADFYVYCILASLPWGGSELFEQVPDEFERVLVGIQSYISIRRHFDDIAFSVFETDEGNSPNKKDFIEDLWERIQVLSRNGWKVKSVPKPHLSFEAQLVAGVSHRFSPISCPPPTISQSSSEIVKGQEKHEADLKYPQRLRRLHIFPTNKAENMQPVDRFVVEECILDVLLFFNGCRKECAFYLVSLPVPFRYEYLMAETIFSQLLLLPNPPFRPIYYTLVIIDLCKALPGAFPSVVVGAVHALFDRISNMDMECRTRLILWFSHHLSNFQFIWPWQEWAYVKDLPKWAPQRVFVQEVLEREIRLSYFDKIKQSIEDAVELEELLPPKAGPNFRYHSDEGKESTDGHRLSKELVAMVRGRKTQGDIISWVDEKIIPVNGAKFALDVVSQTLLDIGSKSFTHLITVLERYGQIISKLCPNEEMQLLLMDEVSAYWKNSTQMIAIAIDRMMGYRLLSNLAIVKWVFSPANVDQFHVSDRPWEILRNAVSKTYNRIFDLRKEIQTLRKGLQAAKEASEKAARELEEAKSIIEIVDGQPVPSENPGRLRRLQARADKAKEGEVTTEESLEAKEALLARGLEESKELLRLLFKSFVEVLTERLPPISADGDVPNLRAGDPNVNSSARDPEATTMEIDNENGGDNDSQLNGQNKKISHNVGELEQWCLCTLGYLKSFSRQYATEIWSHIAMLDQEIFVGNIHPLIRKAAFSGLCRPTSEGSHL.

The 220-residue stretch at 9–228 (LLRIGDRCPE…DLWERIQVLS (220 aa)) folds into the MIF4G domain. Positions 752-797 (SADGDVPNLRAGDPNVNSSARDPEATTMEIDNENGGDNDSQLNGQN) are disordered. Over residues 788 to 797 (DNDSQLNGQN) the composition is skewed to polar residues.

This sequence belongs to the NCBP1 family. In terms of assembly, component of the nuclear cap-binding complex (CBC), a heterodimer composed of ABH1/CBP80 and CBP20 that interacts with m7GpppG-capped RNA.

Its subcellular location is the nucleus. The protein localises to the cytoplasm. Component of the cap-binding complex (CBC), which binds cotranscriptionally to the 5'-cap of pre-mRNAs and is involved in various processes such as pre-mRNA splicing and RNA-mediated gene silencing (RNAi) by microRNAs (miRNAs). The CBC complex is involved in miRNA-mediated RNA interference and is required for primary miRNA processing. In the CBC complex, ABH1/CBP80 does not bind directly capped RNAs (m7GpppG-capped RNA) but is required to stabilize the movement of the N-terminal loop of CBP20 and lock the CBC into a high affinity cap-binding state with the cap structure. The chain is Nuclear cap-binding protein subunit 1 (ABH1) from Oryza sativa subsp. japonica (Rice).